The sequence spans 295 residues: Glutamyl-Q tRNA(Asp) synthetase (295 aa).

L-glutamate-binding positions include 5-9 (RFAPS) and glutamate 41. The short motif at 8–18 (PSPTGLLHIGS) is the 'HIGH' region element. 4 residues coordinate Zn(2+): cysteine 97, cysteine 99, tyrosine 117, and cysteine 121. Tyrosine 178 and arginine 196 together coordinate L-glutamate. Positions 234-238 (KWSKQ) match the 'KMSKS' region motif. Lysine 237 contacts ATP.

Belongs to the class-I aminoacyl-tRNA synthetase family. GluQ subfamily. Requires Zn(2+) as cofactor.

Catalyzes the tRNA-independent activation of glutamate in presence of ATP and the subsequent transfer of glutamate onto a tRNA(Asp). Glutamate is transferred on the 2-amino-5-(4,5-dihydroxy-2-cyclopenten-1-yl) moiety of the queuosine in the wobble position of the QUC anticodon. In Neisseria meningitidis serogroup B (strain ATCC BAA-335 / MC58), this protein is Glutamyl-Q tRNA(Asp) synthetase.